Reading from the N-terminus, the 275-residue chain is 3-methyl-2-oxobutanoate hydroxymethyltransferase (275 aa).

Positions 49 and 88 each coordinate Mg(2+). Residues 49–50 (DS), aspartate 88, and lysine 118 contribute to the 3-methyl-2-oxobutanoate site. Residue glutamate 120 coordinates Mg(2+). Glutamate 187 (proton acceptor) is an active-site residue.

The protein belongs to the PanB family. In terms of assembly, homodecamer; pentamer of dimers. Mg(2+) is required as a cofactor.

It is found in the cytoplasm. It catalyses the reaction 3-methyl-2-oxobutanoate + (6R)-5,10-methylene-5,6,7,8-tetrahydrofolate + H2O = 2-dehydropantoate + (6S)-5,6,7,8-tetrahydrofolate. It functions in the pathway cofactor biosynthesis; (R)-pantothenate biosynthesis; (R)-pantoate from 3-methyl-2-oxobutanoate: step 1/2. Functionally, catalyzes the reversible reaction in which hydroxymethyl group from 5,10-methylenetetrahydrofolate is transferred onto alpha-ketoisovalerate to form ketopantoate. The polypeptide is 3-methyl-2-oxobutanoate hydroxymethyltransferase (Bordetella petrii (strain ATCC BAA-461 / DSM 12804 / CCUG 43448)).